Consider the following 334-residue polypeptide: MRGSFFSRLPPQLSLLLLLLLLLSWRRVWTQEHIGTDPSKSPVAPVCPEACSCSPGGKANCSALALPAVPAGLSWQVRSLLLDRNRVSTLPPGAFADAGALLYLVLRENRLRSVHARAFWGLGVLQRLDLSSNQLETLSPGTFTPLRALSFLSLAGNRLALLEPSILGPLPLLRVLSLQDNSLSALEAGLLNSLPALDVLRLHGNPWACSCALRPLCTWLRKHPRPTSETETLLCVSPKLQTLNLLTDFPDNAFKQCTQSLAARDLAVVYALGPASFLASLAICLALGSVLTACGARRRRRRTTVRHLIRRQPDPEGPASLEDVGSPTTTAIQA.

An N-terminal signal peptide occupies residues 1-30; sequence MRGSFFSRLPPQLSLLLLLLLLLSWRRVWT. The Extracellular portion of the chain corresponds to 31–265; sequence QEHIGTDPSK…QCTQSLAARD (235 aa). Residues 38-75 enclose the LRRNT domain; the sequence is PSKSPVAPVCPEACSCSPGGKANCSALALPAVPAGLSW. Cystine bridges form between Cys-47–Cys-53 and Cys-51–Cys-61. 5 LRR repeats span residues 76 to 97, 100 to 121, 124 to 145, 148 to 169, and 172 to 194; these read QVRS…AFAD, ALLY…AFWG, VLQR…TFTP, ALSF…ILGP, and LLRV…LNSL. The LRRCT domain maps to 205–259; that stretch reads NPWACSCALRPLCTWLRKHPRPTSETETLLCVSPKLQTLNLLTDFPDNAFKQCTQ. Intrachain disulfides connect Cys-209–Cys-235 and Cys-211–Cys-257. Residues 266-286 traverse the membrane as a helical segment; that stretch reads LAVVYALGPASFLASLAICLA. Over 287-334 the chain is Cytoplasmic; the sequence is LGSVLTACGARRRRRRTTVRHLIRRQPDPEGPASLEDVGSPTTTAIQA. Residues 312 to 334 form a disordered region; that stretch reads QPDPEGPASLEDVGSPTTTAIQA.

Interacts with KCNMA1.

It is found in the cell membrane. The protein resides in the cytoplasm. It localises to the cytoskeleton. Its function is as follows. Auxiliary protein of the large-conductance, voltage and calcium-activated potassium channel (BK alpha). Required for the conversion of BK alpha channels from a high-voltage to a low-voltage activated channel type in non-excitable cells. These are characterized by negative membrane voltages and constant low levels of calcium. This chain is Leucine-rich repeat-containing protein 26 (Lrrc26), found in Rattus norvegicus (Rat).